Here is a 250-residue protein sequence, read N- to C-terminus: Low affinity immunoglobulin gamma Fc region receptor III-A (250 aa).

The N-terminal stretch at 1–16 is a signal peptide; sequence MWQLLPPAALLLLVSA. Residues 17–208 lie on the Extracellular side of the membrane; that stretch reads DTQTADPSKA…VSSFFLPWHQ (192 aa). 2 consecutive Ig-like C2-type domains span residues 23 to 105 and 99 to 189; these read PSKA…LEVH and PVKL…VQIT. Disulfide bonds link Cys47/Cys89 and Cys128/Cys172. N-linked (GlcNAc...) asparagine glycans are attached at residues Asn56 and Asn63. Asn180 carries N-linked (GlcNAc...) asparagine glycosylation. Residues 209–225 form a helical membrane-spanning segment; that stretch reads ITFCLVMGVLFAVDTGL. The Cytoplasmic portion of the chain corresponds to 226 to 250; the sequence is YFSVRRHLQSSEEWRDGKVTWSKGP.

Forms a heterooligomeric complex with ITAM-containing signaling subunits FCER1G. Interacts (via transmembrane domain) with signaling subunits; this interaction is a prerequisite for receptor complex expression on the cell surface and intracellular signal transduction. Binds the Fc region of antigen-complexed IgG. Expressed in gamma-delta T cells.

It is found in the cell membrane. In terms of biological role, receptor for the invariable Fc fragment of immunoglobulin gamma (IgG). Optimally activated upon binding of clustered antigen-IgG complexes displayed on cell surfaces, triggers lysis of antibody-coated cells, a process known as antibody-dependent cellular cytotoxicity (ADCC). Does not bind free monomeric IgG, thus avoiding inappropriate effector cell activation in the absence of antigenic trigger. Mediates IgG effector functions on natural killer (NK) cells. Binds antigen-IgG complexes generated upon infection and triggers NK cell-dependent cytokine production and degranulation to limit viral load and propagation. Fc-binding subunit that associates with FCER1G adapters to form functional signaling complexes. Following the engagement of antigen-IgG complexes, triggers phosphorylation of immunoreceptor tyrosine-based activation motif (ITAM)-containing adapter with subsequent activation of phosphatidylinositol 3-kinase signaling and sustained elevation of intracellular calcium that ultimately drive NK cell activation. Mediates enhanced ADCC in response to afucosylated IgGs. This chain is Low affinity immunoglobulin gamma Fc region receptor III-A, found in Bos taurus (Bovine).